Here is a 92-residue protein sequence, read N- to C-terminus: Acylphosphatase (92 aa).

One can recognise an Acylphosphatase-like domain in the interval 5-90 (TWRLVAHGRV…GEFAGFEFRP (86 aa)). Catalysis depends on residues Arg20 and Asn38.

It belongs to the acylphosphatase family.

It catalyses the reaction an acyl phosphate + H2O = a carboxylate + phosphate + H(+). The protein is Acylphosphatase (acyP) of Cupriavidus necator (strain ATCC 17699 / DSM 428 / KCTC 22496 / NCIMB 10442 / H16 / Stanier 337) (Ralstonia eutropha).